We begin with the raw amino-acid sequence, 718 residues long: Methionine--tRNA ligase (718 aa).

The 'HIGH' region signature appears at P27–H37. 4 residues coordinate Zn(2+): C158, C161, C171, and C174. The short motif at K348–S352 is the 'KMSKS' region element. K351 contacts ATP. Residues D612 to K718 enclose the tRNA-binding domain.

The protein belongs to the class-I aminoacyl-tRNA synthetase family. MetG type 1 subfamily. As to quaternary structure, homodimer. Requires Zn(2+) as cofactor.

The protein localises to the cytoplasm. The catalysed reaction is tRNA(Met) + L-methionine + ATP = L-methionyl-tRNA(Met) + AMP + diphosphate. Its function is as follows. Is required not only for elongation of protein synthesis but also for the initiation of all mRNA translation through initiator tRNA(fMet) aminoacylation. In Burkholderia cenocepacia (strain ATCC BAA-245 / DSM 16553 / LMG 16656 / NCTC 13227 / J2315 / CF5610) (Burkholderia cepacia (strain J2315)), this protein is Methionine--tRNA ligase.